The sequence spans 632 residues: Cytosolic Fe-S cluster assembly factor NAR1 (632 aa).

Cysteine 20 serves as a coordination point for [4Fe-4S] cluster. Residues leucine 27–proline 53 are disordered. [4Fe-4S] cluster is bound by residues cysteine 62, cysteine 65, and cysteine 68. Disordered stretches follow at residues tryptophan 99–serine 119 and leucine 210–proline 231. A compositionally biased stretch (low complexity) spans threonine 101–serine 119. The segment covering serine 211–proline 221 has biased composition (polar residues). Cysteine 240, cysteine 295, cysteine 486, and cysteine 490 together coordinate [4Fe-4S] cluster. The segment at glycine 542 to valine 573 is disordered. The segment covering aspartate 544–glycine 554 has biased composition (acidic residues). Residues aspartate 555 to threonine 567 are compositionally biased toward polar residues.

It belongs to the NARF family.

In terms of biological role, component of the cytosolic Fe/S protein assembly machinery. Required for maturation of extramitochondrial Fe/S proteins. May play a role in the transfer of pre-assembled Fe/S clusters to target apoproteins. The sequence is that of Cytosolic Fe-S cluster assembly factor NAR1 (NAR1) from Phaeosphaeria nodorum (strain SN15 / ATCC MYA-4574 / FGSC 10173) (Glume blotch fungus).